The chain runs to 188 residues: Kininogen (188 aa).

3 N-linked (GlcNAc...) asparagine glycosylation sites follow: N36, N150, and N182.

Bradykinin is released from kininogen by kallikrein. Post-translationally, N-glycosylated. Contains O-acetylated sialic acids as terminal elements on biantennary and triantennary N-glycans.

Functionally, inhibits papain and ficin (cysteine proteinases) but not trypsin (a serine proteinase). The chain is Kininogen from Anarhichas minor (Arctic spotted wolffish).